The following is a 197-amino-acid chain: Adenylate kinase (197 aa).

An ATP-binding site is contributed by 16–21; it reads GAGKGT. An NMP region spans residues 36–65; that stretch reads STGDILRDHVARGTELGQQVKPILDAGHLV. AMP-binding positions include threonine 37, arginine 42, 63–65, 90–93, and glutamine 97; these read HLV and GFPR. The segment at 131-147 is LID; it reads ERGNQAQARGEAVRSDD. Arginine 132 serves as a coordination point for ATP. The AMP site is built by arginine 144 and arginine 155. Residue glycine 183 coordinates ATP.

The protein belongs to the adenylate kinase family. In terms of assembly, monomer.

The protein localises to the cytoplasm. The enzyme catalyses AMP + ATP = 2 ADP. It participates in purine metabolism; AMP biosynthesis via salvage pathway; AMP from ADP: step 1/1. Catalyzes the reversible transfer of the terminal phosphate group between ATP and AMP. Plays an important role in cellular energy homeostasis and in adenine nucleotide metabolism. This is Adenylate kinase from Deinococcus deserti (strain DSM 17065 / CIP 109153 / LMG 22923 / VCD115).